The following is a 129-amino-acid chain: Large ribosomal subunit protein bL17 (129 aa).

Belongs to the bacterial ribosomal protein bL17 family. Part of the 50S ribosomal subunit. Contacts protein L32.

The polypeptide is Large ribosomal subunit protein bL17 (Yersinia pseudotuberculosis serotype O:1b (strain IP 31758)).